The chain runs to 271 residues: Pyrroline-5-carboxylate reductase (271 aa).

The protein belongs to the pyrroline-5-carboxylate reductase family.

It localises to the cytoplasm. The enzyme catalyses L-proline + NADP(+) = (S)-1-pyrroline-5-carboxylate + NADPH + 2 H(+). It carries out the reaction L-proline + NAD(+) = (S)-1-pyrroline-5-carboxylate + NADH + 2 H(+). It functions in the pathway amino-acid biosynthesis; L-proline biosynthesis; L-proline from L-glutamate 5-semialdehyde: step 1/1. Functionally, catalyzes the reduction of 1-pyrroline-5-carboxylate (PCA) to L-proline. The sequence is that of Pyrroline-5-carboxylate reductase from Staphylococcus saprophyticus subsp. saprophyticus (strain ATCC 15305 / DSM 20229 / NCIMB 8711 / NCTC 7292 / S-41).